Reading from the N-terminus, the 313-residue chain is Fructose-1,6-bisphosphatase class 1 (313 aa).

Mg(2+) contacts are provided by Glu-91, Asp-112, Leu-114, and Asp-115. Substrate contacts are provided by residues 115 to 118 (DGSS), Tyr-223, and Lys-254. Glu-260 provides a ligand contact to Mg(2+).

Belongs to the FBPase class 1 family. Homotetramer. Mg(2+) is required as a cofactor.

The protein resides in the cytoplasm. The enzyme catalyses beta-D-fructose 1,6-bisphosphate + H2O = beta-D-fructose 6-phosphate + phosphate. Its pathway is carbohydrate biosynthesis; gluconeogenesis. The polypeptide is Fructose-1,6-bisphosphatase class 1 (Geobacter sulfurreducens (strain ATCC 51573 / DSM 12127 / PCA)).